The primary structure comprises 299 residues: MTLSVLSRKDKERVIRRLLLQAPPGEFVNAFDDLCLLIRDEKLMHHQGECAGHQHCQKYSVPLCIDGNPVLLSHHNVMGDYRFFDHQSKLSFRYDLLQNQLKDIQSHGIIRNETEYLRVVVLCALKLYVNDHYPKGNCNVLRKTVKSKEYLIACIEDHNYETGECWNGLWKSKWIFQVNPFLTQVTGRIFVQAHFFRCVNLHIEISKDLKESLEIVNQAQLALSFARLVEEQENKFQAAVLEELQELSNEALRKILRRDLPVTRTLIDWQRILSDLNLVMYPKLGYVIYSRSVLCNWII.

Residue Ser290 is modified to Phosphoserine.

Belongs to the F-actin-capping protein alpha subunit family. Component of the F-actin capping complex, composed of a heterodimer of an alpha and a beta subunit. Component of the WASH complex, composed of F-actin-capping protein subunit alpha (CAPZA1, CAPZA2 or CAPZA3), F-actin-capping protein subunit beta (CAPZB), WASHC1, WASHC2, WASHC3, WASHC4 and WASHC5.

In terms of biological role, F-actin-capping proteins bind in a Ca(2+)-independent manner to the fast growing ends of actin filaments (barbed end) thereby blocking the exchange of subunits at these ends. Unlike other capping proteins (such as gelsolin and severin), these proteins do not sever actin filaments. May play a role in the morphogenesis of spermatid. This is F-actin-capping protein subunit alpha-3 (CAPZA3) from Macaca fascicularis (Crab-eating macaque).